Here is a 212-residue protein sequence, read N- to C-terminus: Peptide methionine sulfoxide reductase MsrA (212 aa).

C52 is a catalytic residue.

Belongs to the MsrA Met sulfoxide reductase family.

The catalysed reaction is L-methionyl-[protein] + [thioredoxin]-disulfide + H2O = L-methionyl-(S)-S-oxide-[protein] + [thioredoxin]-dithiol. The enzyme catalyses [thioredoxin]-disulfide + L-methionine + H2O = L-methionine (S)-S-oxide + [thioredoxin]-dithiol. Has an important function as a repair enzyme for proteins that have been inactivated by oxidation. Catalyzes the reversible oxidation-reduction of methionine sulfoxide in proteins to methionine. This Escherichia coli O17:K52:H18 (strain UMN026 / ExPEC) protein is Peptide methionine sulfoxide reductase MsrA.